A 275-amino-acid polypeptide reads, in one-letter code: F-box only protein 50 (275 aa).

The interval 1–67 is disordered; that stretch reads MEEVREGHAL…LPEPAQPSEA (67 aa). Residues 26 to 62 show a composition bias toward pro residues; that stretch reads PPSPRSPSPPPSPPPLPSPPSLPSPAAPEAPELPEPA. S31, S37, and S49 each carry phosphoserine. Residues 95–273 form the FBA domain; it reads LLLRRPLYRN…VTDSSVSVQL (179 aa).

Expressed in the esophagus, oral cavity, skin, tongue and reproductive organs.

The protein localises to the cytoplasm. Promotes cell proliferation. The protein is F-box only protein 50 (NCCRP1) of Homo sapiens (Human).